The chain runs to 143 residues: Probable glycine cleavage system H protein (143 aa).

Residues 36–118 (VATVGITDFA…YGEGWIFKIK (83 aa)) form the Lipoyl-binding domain. N6-lipoyllysine is present on K77.

The protein belongs to the GcvH family. In terms of assembly, the glycine cleavage system is composed of four proteins: P, T, L and H. The cofactor is (R)-lipoate.

Functionally, the glycine cleavage system catalyzes the degradation of glycine. The H protein shuttles the methylamine group of glycine from the P protein to the T protein. The protein is Probable glycine cleavage system H protein of Aeropyrum pernix (strain ATCC 700893 / DSM 11879 / JCM 9820 / NBRC 100138 / K1).